Reading from the N-terminus, the 250-residue chain is tRNA (guanine-N(1)-)-methyltransferase (250 aa).

S-adenosyl-L-methionine contacts are provided by residues glycine 113 and 134–139 (IGDYVL).

This sequence belongs to the RNA methyltransferase TrmD family. In terms of assembly, homodimer.

It is found in the cytoplasm. The enzyme catalyses guanosine(37) in tRNA + S-adenosyl-L-methionine = N(1)-methylguanosine(37) in tRNA + S-adenosyl-L-homocysteine + H(+). Its function is as follows. Specifically methylates guanosine-37 in various tRNAs. This is tRNA (guanine-N(1)-)-methyltransferase from Buchnera aphidicola subsp. Baizongia pistaciae (strain Bp).